Here is a 1215-residue protein sequence, read N- to C-terminus: Protein benign gonial cell neoplasm (1215 aa).

The ANK repeat unit spans residues 407–439 (TGKTAVHFASELNKANHLRLLLFMGADPYIVDL). Thr-898 bears the Phosphothreonine mark.

In terms of assembly, part of a complex composed of at least mei-P26, bam, bgcn and Sxl; this complex is involved in translational repression of nanos mRNA. Interacts with bam (via C-terminus); the interaction is direct. Interacts with mei-P26; the interaction is direct and does not require bam. Weakly interacts with wh/wuho; this interaction may be required for the function or formation of the mei-P26-bgcn-bam-Sxl complex. Part of a complex composed of at least tut, bam and bgcn; complex formation does not require RNA. Interacts with tut; the interaction is indirect and is mediated by bam. As part of the bam-bgcn-tut complex associates with twin; may recruit the CCR4-NOT1 deadenylation complex to mRNA 3'UTRs to mediate post-transcriptional regulation of expression. Expressed in testis and in 5-8 germline stem cells of ovaries, immediately adjacent to terminal filament. Expressed in ovarian germline cells throughout the germarium (at protein level).

Its function is as follows. Forms a complex with tut and bam involved in 3'UTR-dependent post-transcriptional repression of several 3'-RNA processing factors, which promotes germline stem cell lineage differentiation and mitosis-to-meiosis transition. Part of a complex with bam involved in 3'-UTR-dependent translational repression of a subset of mRNAs, including those for mei-P26, nanos and shg/E-cadherin; may act as a promiscuous RNA-binding protein tethering bam to its target mRNAs. Required for regulating the progression of gonialblast cells through transit amplification and differentiation into gametes. The sequence is that of Protein benign gonial cell neoplasm from Drosophila melanogaster (Fruit fly).